We begin with the raw amino-acid sequence, 223 residues long: Large ribosomal subunit protein uL4 (223 aa).

The interval 49–106 (AAARQGTHSTKTRGEVSGGGRKPYRQKGTGRARQGSTRAPQFTGGGVVHGPKPRDYSQ) is disordered.

This sequence belongs to the universal ribosomal protein uL4 family. Part of the 50S ribosomal subunit.

In terms of biological role, one of the primary rRNA binding proteins, this protein initially binds near the 5'-end of the 23S rRNA. It is important during the early stages of 50S assembly. It makes multiple contacts with different domains of the 23S rRNA in the assembled 50S subunit and ribosome. Its function is as follows. Forms part of the polypeptide exit tunnel. This chain is Large ribosomal subunit protein uL4, found in Mycobacterium bovis (strain ATCC BAA-935 / AF2122/97).